Here is a 196-residue protein sequence, read N- to C-terminus: MSEKATEIANLLGPTVESLGLELLGVEYLPAPGGATLRLYIDVPLAEQPDRIINVDDCERVSREVSAQLDVEDPISGNYTLEVSSPGVDRPLFTLDQFARHVGESAKIVLKLAQDGRRRFQGQIVRIDTEAAAVVFSVDGKDVQIGFGNIDKARILPDWVALGLAPQKPNKPGPKKPGHDKKKPSNEPAAGKPRAE.

Positions 164 to 196 (LAPQKPNKPGPKKPGHDKKKPSNEPAAGKPRAE) are disordered. Residues 173–182 (GPKKPGHDKK) are compositionally biased toward basic residues.

The protein belongs to the RimP family.

The protein resides in the cytoplasm. In terms of biological role, required for maturation of 30S ribosomal subunits. This is Ribosome maturation factor RimP from Xanthomonas campestris pv. campestris (strain 8004).